Reading from the N-terminus, the 540-residue chain is Chaperonin GroEL (540 aa).

Residues 29 to 32 (TIGP), 86 to 90 (DGTTT), Gly413, 476 to 478 (NAA), and Asp492 each bind ATP. The disordered stretch occupies residues 520-540 (DKPEPESNNQMPATPGMGGMM).

Belongs to the chaperonin (HSP60) family. As to quaternary structure, forms a cylinder of 14 subunits composed of two heptameric rings stacked back-to-back. Interacts with the co-chaperonin GroES.

Its subcellular location is the cytoplasm. The catalysed reaction is ATP + H2O + a folded polypeptide = ADP + phosphate + an unfolded polypeptide.. Its function is as follows. Together with its co-chaperonin GroES, plays an essential role in assisting protein folding. The GroEL-GroES system forms a nano-cage that allows encapsulation of the non-native substrate proteins and provides a physical environment optimized to promote and accelerate protein folding. In Ligilactobacillus salivarius (strain UCC118) (Lactobacillus salivarius), this protein is Chaperonin GroEL.